The following is a 218-amino-acid chain: Protein-L-isoaspartate O-methyltransferase (218 aa).

Residue Ser-66 is part of the active site.

The protein belongs to the methyltransferase superfamily. L-isoaspartyl/D-aspartyl protein methyltransferase family.

The protein localises to the cytoplasm. It carries out the reaction [protein]-L-isoaspartate + S-adenosyl-L-methionine = [protein]-L-isoaspartate alpha-methyl ester + S-adenosyl-L-homocysteine. Catalyzes the methyl esterification of L-isoaspartyl residues in peptides and proteins that result from spontaneous decomposition of normal L-aspartyl and L-asparaginyl residues. It plays a role in the repair and/or degradation of damaged proteins. In Caulobacter sp. (strain K31), this protein is Protein-L-isoaspartate O-methyltransferase.